A 147-amino-acid polypeptide reads, in one-letter code: Phospholipase A2 inhibitor subunit B (147 aa).

Positions 62-143 (EICEEAGGHI…DEKLLVVCEF (82 aa)) constitute a C-type lectin domain. 2 cysteine pairs are disulfide-bonded: Cys-64-Cys-141 and Cys-119-Cys-133. Asn-103 carries an N-linked (GlcNAc...) asparagine glycan.

It belongs to the alpha-type phospholipase A2 inhibitor family. As to quaternary structure, homo- or heterotrimer; homotrimer of PLI-A chains, two PLI-A and one PLI-B chains, one PLI-A and two PLI-B chains, and homotrimer of PLI-B chains (with a ratio of 1:3:3:1). Expressed by the liver.

Its subcellular location is the secreted. Its function is as follows. PLI binds directly phospholipase A2 in the presence or absence of calcium. Inhibitory activity of the PLI-B homotrimer is less specific than that of the PLI-A homotrimer. The chain is Phospholipase A2 inhibitor subunit B from Protobothrops flavoviridis (Habu).